Here is a 127-residue protein sequence, read N- to C-terminus: Auxin-responsive protein SAUR76 (127 aa).

The tract at residues 20–40 (SFNTKPNQPPAQTNHSRSSAV) is disordered.

This sequence belongs to the ARG7 family. Expressed in cotyledons, hypocotyls and roots of young seedlings. Expressed in emerging lateral root, leaves, flowers, stamens and filaments.

Its subcellular location is the nucleus. The protein resides in the cytoplasm. It is found in the cell membrane. Its function is as follows. May be involved in the regulation of ethylene receptor signaling. Promotes cell expansion and plant growth. Involved in the regulation of cell elongation. The protein is Auxin-responsive protein SAUR76 of Arabidopsis thaliana (Mouse-ear cress).